The sequence spans 399 residues: Cell division protein DivIB (399 aa).

Disordered stretches follow at residues M1–Q23 and E35–E119. At M1–R133 the chain is on the cytoplasmic side. Composition is skewed to basic and acidic residues over residues E35 to Q65 and E75 to E119. The helical transmembrane segment at A134 to P154 threads the bilayer. The Extracellular portion of the chain corresponds to Y155–R399. The 71-residue stretch at A156–Y226 folds into the POTRA domain. Residues K364–N388 are compositionally biased toward basic and acidic residues. A disordered region spans residues K364–R399. Residues R389 to R399 show a composition bias toward polar residues.

It belongs to the FtsQ/DivIB family. DivIB subfamily.

The protein localises to the cell membrane. Its function is as follows. Cell division protein that may be involved in stabilizing or promoting the assembly of the division complex. This Streptococcus pneumoniae serotype 4 (strain ATCC BAA-334 / TIGR4) protein is Cell division protein DivIB.